A 105-amino-acid chain; its full sequence is Probable tetrachloroethene reductive dehalogenase membrane anchor protein (105 aa).

The next 3 helical transmembrane spans lie at 3–23 (IYDV…QYGI), 35–55 (IPLQ…LAWG), and 66–86 (AIGM…IITY).

Belongs to the PceB family.

Its subcellular location is the cell membrane. In terms of biological role, may act as a membrane anchor for the tetrachloroethene reductive dehalogenase PceA. This Desulfitobacterium hafniense (Desulfitobacterium frappieri) protein is Probable tetrachloroethene reductive dehalogenase membrane anchor protein.